Consider the following 333-residue polypeptide: MIILGIESSCDDTAAAVVSDHNTVLSSVVSSQVDVHHRYGGVVPELASRMHIEAISPVVAQAVDQAGISPDQIEGVAVTRGPGLIGALLVGFSFAKAFAWAKNIPWAGVNHLEGHIYSLLLSDDPPAFPFTALLASGGHTSIFHVVSQDRFELLGQTRDDAAGEAFDKVAKMLGLGYPGGAVVEALAAKGDPCLIPFPRSFLDKDGFDFSFSGLKSAVARYVQLNRENLGEMMPHIAAGFQSAVTDVLAFKLIHAARATGCSRIAIAGGVSANRFLASRMKIEAAKHNMALYLPPPSFCGDNAAMIAARGHRLISQGDLCQLDSDVFSRTRFL.

Residues His-111 and His-115 each coordinate Fe cation. Substrate is bound by residues 134–138 (LASGG), Asp-167, Gly-180, and Asn-273. Asp-301 contacts Fe cation.

It belongs to the KAE1 / TsaD family. It depends on Fe(2+) as a cofactor.

Its subcellular location is the cytoplasm. It catalyses the reaction L-threonylcarbamoyladenylate + adenosine(37) in tRNA = N(6)-L-threonylcarbamoyladenosine(37) in tRNA + AMP + H(+). Functionally, required for the formation of a threonylcarbamoyl group on adenosine at position 37 (t(6)A37) in tRNAs that read codons beginning with adenine. Is involved in the transfer of the threonylcarbamoyl moiety of threonylcarbamoyl-AMP (TC-AMP) to the N6 group of A37, together with TsaE and TsaB. TsaD likely plays a direct catalytic role in this reaction. The sequence is that of tRNA N6-adenosine threonylcarbamoyltransferase from Desulforapulum autotrophicum (strain ATCC 43914 / DSM 3382 / VKM B-1955 / HRM2) (Desulfobacterium autotrophicum).